We begin with the raw amino-acid sequence, 147 residues long: Mannitol-specific cryptic phosphotransferase enzyme IIA component (147 aa).

A PTS EIIA type-2 domain is found at 5–147 (DYFPESSISV…KQLADIISRG (143 aa)). H67 (tele-phosphohistidine intermediate) is an active-site residue. Residue H67 is modified to Phosphohistidine; by HPr.

It localises to the cytoplasm. Functionally, the phosphoenolpyruvate-dependent sugar phosphotransferase system (sugar PTS), a major carbohydrate active transport system, catalyzes the phosphorylation of incoming sugar substrates concomitantly with their translocation across the cell membrane. The enzyme II CmtAB PTS system is involved in D-mannitol transport. This is Mannitol-specific cryptic phosphotransferase enzyme IIA component (cmtB) from Escherichia coli O157:H7.